The primary structure comprises 140 residues: Large ribosomal subunit protein uL11 (140 aa).

The protein belongs to the universal ribosomal protein uL11 family. In terms of assembly, part of the ribosomal stalk of the 50S ribosomal subunit. Interacts with L10 and the large rRNA to form the base of the stalk. L10 forms an elongated spine to which L12 dimers bind in a sequential fashion forming a multimeric L10(L12)X complex. In terms of processing, one or more lysine residues are methylated.

Functionally, forms part of the ribosomal stalk which helps the ribosome interact with GTP-bound translation factors. In Dehalococcoides mccartyi (strain ATCC BAA-2100 / JCM 16839 / KCTC 5957 / BAV1), this protein is Large ribosomal subunit protein uL11.